Consider the following 52-residue polypeptide: Large ribosomal subunit protein bL33 (52 aa).

The protein belongs to the bacterial ribosomal protein bL33 family.

In Helicobacter acinonychis (strain Sheeba), this protein is Large ribosomal subunit protein bL33.